We begin with the raw amino-acid sequence, 268 residues long: Tryptophan synthase alpha chain (268 aa).

Residues Glu49 and Asp60 each act as proton acceptor in the active site.

It belongs to the TrpA family. Tetramer of two alpha and two beta chains.

It catalyses the reaction (1S,2R)-1-C-(indol-3-yl)glycerol 3-phosphate + L-serine = D-glyceraldehyde 3-phosphate + L-tryptophan + H2O. It participates in amino-acid biosynthesis; L-tryptophan biosynthesis; L-tryptophan from chorismate: step 5/5. Its function is as follows. The alpha subunit is responsible for the aldol cleavage of indoleglycerol phosphate to indole and glyceraldehyde 3-phosphate. This is Tryptophan synthase alpha chain from Shigella boydii serotype 4 (strain Sb227).